The chain runs to 347 residues: NADH-ubiquinone oxidoreductase chain 2 (347 aa).

10 consecutive transmembrane segments (helical) span residues 13–33, 55–75, 96–116, 122–142, 151–171, 178–198, 199–219, 237–257, 277–297, and 326–346; these read VFTGTLITALSSHWFFAWLGL, AAIKYFLTQATASMIFLMAIL, LMIVTALAMKLGMAPFHFWVP, VPLTSGLLLLTWQKLAPISIM, TNILLTLSILSILVGSWGGLN, ILAYSSITHMGWMVAVLPYNP, NITILNLIIYITLTTTTFLIL, LTWLMPLISSTLLSLGGLPPL, IAPTIMAIISLLNLYFYARLI, and LPTLTILTALLLPISPLILSI.

This sequence belongs to the complex I subunit 2 family. Core subunit of respiratory chain NADH dehydrogenase (Complex I) which is composed of 45 different subunits. Interacts with TMEM242.

It localises to the mitochondrion inner membrane. It catalyses the reaction a ubiquinone + NADH + 5 H(+)(in) = a ubiquinol + NAD(+) + 4 H(+)(out). In terms of biological role, core subunit of the mitochondrial membrane respiratory chain NADH dehydrogenase (Complex I) which catalyzes electron transfer from NADH through the respiratory chain, using ubiquinone as an electron acceptor. Essential for the catalytic activity and assembly of complex I. The sequence is that of NADH-ubiquinone oxidoreductase chain 2 from Pongo pygmaeus (Bornean orangutan).